Reading from the N-terminus, the 268-residue chain is UPF0739 protein C1orf74 homolog (268 aa).

Belongs to the UPF0739 family.

The polypeptide is UPF0739 protein C1orf74 homolog (Salmo salar (Atlantic salmon)).